Reading from the N-terminus, the 512-residue chain is Sucrose-6-phosphate hydrolase (512 aa).

Residues W40–D43, Q59, W67, F102–S103, R165–D166, E229, and W311 each bind substrate. D43 is a catalytic residue.

It belongs to the glycosyl hydrolase 32 family.

It localises to the cytoplasm. The enzyme catalyses Hydrolysis of terminal non-reducing beta-D-fructofuranoside residues in beta-D-fructofuranosides.. The protein operates within glycan biosynthesis; sucrose metabolism. In Zymomonas mobilis subsp. mobilis (strain ATCC 31821 / ZM4 / CP4), this protein is Sucrose-6-phosphate hydrolase (sacA).